The primary structure comprises 301 residues: MPIIIDKDLPARKVLQEENIFVMTKERAETQDIRALKIAILNLMPTKQETEAQLLRLIGNTPLQLDVHLLHMESHLSRNVAQEHLTSFYKTFRDIENEKFDGLIITGAPVETLSFEEVDYWEELKRIMEYSKTNVTSTLHICWGAQAGLYHHYGVPKYPLKEKIFGVFEHEVREQHVKLLQGFDELFFAPHSRHTEVRESDIREVKELTLLANSEEAGVHLVIGQEGRQVFALGHSEYSCDTLKQEYERDRQKGLNIDVPKNYFKHNNPNEKPLVRWRSHGNLLFSNWLNYYVYQETPYVL.

The Acyl-thioester intermediate role is filled by C142. Residues K163 and S192 each contribute to the substrate site. The active-site Proton acceptor is the H235. Residue E237 is part of the active site. Position 249 (R249) interacts with substrate.

This sequence belongs to the MetA family.

The protein localises to the cytoplasm. It carries out the reaction L-homoserine + acetyl-CoA = O-acetyl-L-homoserine + CoA. Its pathway is amino-acid biosynthesis; L-methionine biosynthesis via de novo pathway; O-acetyl-L-homoserine from L-homoserine: step 1/1. Its function is as follows. Transfers an acetyl group from acetyl-CoA to L-homoserine, forming acetyl-L-homoserine. This is Homoserine O-acetyltransferase from Bacillus cereus (strain AH187).